We begin with the raw amino-acid sequence, 244 residues long: Ribonuclease HII (244 aa).

The 192-residue stretch at 31–222 (RLIAGVDEAG…VRLALQGREG (192 aa)) folds into the RNase H type-2 domain. Residues aspartate 37, glutamate 38, and aspartate 130 each contribute to the a divalent metal cation site.

It belongs to the RNase HII family. It depends on Mn(2+) as a cofactor. Mg(2+) serves as cofactor.

It localises to the cytoplasm. The enzyme catalyses Endonucleolytic cleavage to 5'-phosphomonoester.. Functionally, endonuclease that specifically degrades the RNA of RNA-DNA hybrids. The chain is Ribonuclease HII from Xanthomonas axonopodis pv. citri (strain 306).